The sequence spans 454 residues: Probable xylan O-acetyltransferase 9 (454 aa).

Over 1–15 (MKAPPPPSPVAKRAR) the chain is Cytoplasmic. A helical; Signal-anchor for type II membrane protein membrane pass occupies residues 16-36 (VSPFVFLLVLFLLLFSFLYGE). Topologically, residues 37–454 (DLKELLGSQA…ELLYTKLFYP (418 aa)) are lumenal. 4 cysteine pairs are disulfide-bonded: Cys-101–Cys-152, Cys-123–Cys-188, Cys-132–Cys-435, and Cys-352–Cys-431. The short motif at 175–177 (GDS) is the GDS motif element. The Nucleophile role is filled by Ser-177. Residues Asn-219, Asn-293, and Asn-394 are each glycosylated (N-linked (GlcNAc...) asparagine). Asp-430 (proton donor) is an active-site residue. The short motif at 430–433 (DCVH) is the DXXH motif element. His-433 serves as the catalytic Proton acceptor.

Belongs to the PC-esterase family. TBL subfamily.

The protein localises to the golgi apparatus membrane. In terms of biological role, probable xylan acetyltransferase required for 2-O- and 3-O-monoacetylation of xylosyl residues in xylan. Possesses extremely low activity in vitro. The polypeptide is Probable xylan O-acetyltransferase 9 (Oryza sativa subsp. japonica (Rice)).